The sequence spans 160 residues: Peripheral myelin protein 22 (160 aa).

Residue M1 is a topological domain, cytoplasmic. A helical transmembrane segment spans residues 2-31; that stretch reads LLLLLSIIVLHVAVLVLLFVSTIVSQWIVG. Topologically, residues 32-64 are extracellular; it reads NGHATDLWQNCSTSSSGNVHHCFSSSPNEWLQS. N41 carries N-linked (GlcNAc...) asparagine glycosylation. A helical transmembrane segment spans residues 65–91; sequence VQATMILSIIFSILSLFLFFCQLFTLT. The Cytoplasmic portion of the chain corresponds to 92–95; that stretch reads KGGR. Residues 96-119 form a helical membrane-spanning segment; that stretch reads FYITGIFQILAGLCVMSAAAIYTV. Residues 120 to 133 are Extracellular-facing; that stretch reads RHPEWHLNSDYSYG. Residues 134–156 traverse the membrane as a helical segment; it reads FAYILAWVAFPLALLSGVIYVIL. The Cytoplasmic portion of the chain corresponds to 157–160; the sequence is RKRE.

This sequence belongs to the PMP-22/EMP/MP20 family. In terms of processing, ubiquitinated by the DCX(DCAF13) E3 ubiquitin ligase complex, leading to its degradation.

It localises to the cell membrane. Functionally, might be involved in growth regulation, and in myelinization in the peripheral nervous system. The chain is Peripheral myelin protein 22 (PMP22) from Homo sapiens (Human).